The primary structure comprises 2515 residues: Probable maltase-glucoamylase 2 (2515 aa).

The Cytoplasmic portion of the chain corresponds to 1–9; sequence MARKLSVLE. Residues 10 to 30 form a helical membrane-spanning segment; that stretch reads VLLIIFCLIVVTIDILLLLLV. Topologically, residues 31–482 are lumenal; it reads LEETSDTSFT…DGVWIEMNEV (452 aa). The P-type 1 domain occupies 41 to 88; the sequence is PECPEIPQSERIDCTPDQEVTEDICRWQYKCCWSPVADANVPRCFFPW. Disulfide bonds link Cys-43-Cys-72, Cys-54-Cys-71, and Cys-65-Cys-84. The tract at residues 152–865 is maltase; that stretch reads SHENINLVDG…MDKQPANFIV (714 aa). The N-linked (GlcNAc...) asparagine glycan is linked to Asn-167. Tyr-371 carries the post-translational modification Sulfotyrosine. N-linked (GlcNAc...) asparagine glycosylation is present at Asn-421. Catalysis depends on Glu-478, which acts as the Nucleophile. Glu-481 is a catalytic residue. Disulfide bonds link Cys-608/Cys-619, Cys-916/Cys-933, and Cys-928/Cys-946. The N-linked (GlcNAc...) asparagine glycan is linked to Asn-613. The region spanning 904-950 is the P-type 2 domain; the sequence is WNLPVSDLEKFNCYPDDPTASEESCRQRGCLWEDTSTPGVPTCYYDT. The segment at 1023–1766 is glucoamylase; it reads PLNTPPQPVG…GVNTYVTQVS (744 aa). Sulfotyrosine is present on Tyr-1238. The Nucleophile role is filled by Asp-1375. Glu-1378 is an active-site residue. Disordered stretches follow at residues 1816-1901, 1994-2015, and 2037-2091; these read TPTK…PITT, STTV…STNA, and TVPD…SSTT. Residues 1817–1831 are compositionally biased toward polar residues; the sequence is PTKTSTIPMSSHPSP. A compositionally biased stretch (low complexity) spans 1832 to 1901; that stretch reads STTNATSSET…STNATVPITT (70 aa). Residue Asn-2249 is glycosylated (N-linked (GlcNAc...) asparagine).

It belongs to the glycosyl hydrolase 31 family.

The protein localises to the membrane. It carries out the reaction Hydrolysis of terminal (1-&gt;4)-linked alpha-D-glucose residues successively from non-reducing ends of the chains with release of beta-D-glucose.. In Homo sapiens (Human), this protein is Probable maltase-glucoamylase 2.